The primary structure comprises 391 residues: E3 ubiquitin-protein ligase RMND5A (391 aa).

The region spanning 114-146 is the LisH domain; sequence SQQILSEVMVEHFFRQGMLDVAEELCQEAGLSI. One can recognise a CTLH domain in the interval 153-210; sequence PFVELNRILEALKVRVLRPALEWAVSNREMLMAQNSSLEFKLHRLYFISLLMGGTVNQ. The RING-Gid-type zinc-finger motif lies at 336-377; sequence CPILRQQTTDNNPPMKLVCGHIISRDALNKMFNGSKLKCPYC.

As to quaternary structure, identified in the CTLH complex that contains at least RANBP9, MKLN1, MAEA, RMND5A, GID8 and ARMC8.

It is found in the nucleus. The protein localises to the nucleoplasm. The protein resides in the cytoplasm. It catalyses the reaction S-ubiquitinyl-[E2 ubiquitin-conjugating enzyme]-L-cysteine + [acceptor protein]-L-lysine = [E2 ubiquitin-conjugating enzyme]-L-cysteine + N(6)-ubiquitinyl-[acceptor protein]-L-lysine.. E3 ubiquitin-protein ligase component of the CTLH complex. This is E3 ubiquitin-protein ligase RMND5A (rmnd5a) from Xenopus tropicalis (Western clawed frog).